We begin with the raw amino-acid sequence, 1106 residues long: Protein translocase subunit SecA (1106 aa).

ATP-binding positions include Gln-175, 193–197 (GEGKT), and Asp-694. The disordered stretch occupies residues 1021–1106 (QEAPADEQQP…KYKNCHGQNA (86 aa)). Residues 1042 to 1056 (QRQDMSKYREQKQDL) are compositionally biased toward basic and acidic residues. Polar residues predominate over residues 1057 to 1067 (SDPNQQAAASQ). Residues 1068–1085 (DTREQQKREPIRAEKTVG) are compositionally biased toward basic and acidic residues. Zn(2+)-binding residues include Cys-1090, Cys-1092, Cys-1101, and His-1102.

This sequence belongs to the SecA family. In terms of assembly, monomer and homodimer. Part of the essential Sec protein translocation apparatus which comprises SecA, SecYEG and auxiliary proteins SecDF. Other proteins may also be involved. The cofactor is Zn(2+).

The protein localises to the cell inner membrane. It is found in the cytoplasm. The enzyme catalyses ATP + H2O + cellular proteinSide 1 = ADP + phosphate + cellular proteinSide 2.. In terms of biological role, part of the Sec protein translocase complex. Interacts with the SecYEG preprotein conducting channel. Has a central role in coupling the hydrolysis of ATP to the transfer of proteins into and across the cell membrane, serving as an ATP-driven molecular motor driving the stepwise translocation of polypeptide chains across the membrane. The sequence is that of Protein translocase subunit SecA from Bacteroides thetaiotaomicron (strain ATCC 29148 / DSM 2079 / JCM 5827 / CCUG 10774 / NCTC 10582 / VPI-5482 / E50).